A 470-amino-acid chain; its full sequence is MTMSENSRNLEAGLLLRKNQNDINECRITAVVLFSTFVSVCGSFCFGCAAGYSSVAQTGIINDLGLSVAQYSMFGSIMTFGGMIGAIFSGKVADLMGRKGTMWFAQIFCIFGWVAVALAKDSMWLDIGRLSTGFAVGLLSYVIPVYIAEITPKHVRGAFVFANQLMQSCGLSLFYVIGNFVHWRNLALIGLIPCALQVVTLFFIPESPRLLGKWGHEKECRASLQSLRGDDADISEEANTIKETMILFDEGPKSRVMDLFQRRYAPSVVIGVGLMLLQQLSGSSGLMYYVGSVFDKGGFPSSIGSMILAVIMIPKALLGLILVEKMGRRPLLLASTGGMCFFSLLLSFSFCFRSYGMLDELTPIFTCIGVVGFISSFAVGMGGLPWIIMSEIFPMNVKVSAGTLVTLANWSFGWIVAFAYNFMLEWNASGTFLIFFTICGAGIVFIYAMVPETKGRTLEDIQASLTDFLQ.

The Essential for the localization to the vacuole membrane signature appears at 10-16; it reads LEAGLLL. A run of 12 helical transmembrane segments spans residues 28-48, 68-88, 99-119, 130-150, 157-177, 186-206, 268-288, 303-323, 332-352, 368-388, 404-424, and 430-450; these read ITAV…CFGC, VAQY…GAIF, KGTM…VALA, LSTG…IAEI, GAFV…FYVI, LALI…FIPE, VVIG…GLMY, IGSM…LILV, LLAS…SFCF, IGVV…PWII, LVTL…NFML, and GTFL…YAMV.

The protein belongs to the major facilitator superfamily. Sugar transporter (TC 2.A.1.1) family. In terms of tissue distribution, expressed in both shoots and roots. In roots, strongly expressed in pericycle and xylem parenchyma cells, and to a lesser extent in the root endodermis. In flowers, expressed in sepals.

The protein resides in the vacuole membrane. It is found in the vesicle. In terms of biological role, sugar transporter. Transports monosaccharides across the vacuolar membrane independently from a proton gradient. May function coordinately with the vacuolar invertase to regulate osmotic pressure by affecting the accumulation of sugar in the cells under abiotic stress conditions. The polypeptide is Sugar transporter ESL1 (Arabidopsis thaliana (Mouse-ear cress)).